The chain runs to 486 residues: MNADAKTEIKGRERYKAGVLKYAQMGYWNGDYEPKDTDLIALFRITPQDGVDPIEAAAAVAGESSTATWTVVWTDRLTACDQYRAKAYRVDPVPGTPGQYFCYVAYDLILFEEGSIANLTASIIGNVFSFKPLKAARLEDMRLPVAYVKTFKGPPTGIVVERERLDKFGKPLLGATTKPKLGLSGKNYGRVVYEGLKGGLDFMKDDENINSQPFMHWRDRYLYCMEAVNHASAVTGEVKGHYLNVTAGTMEEMYRRAEFAKELGSVIVMVDLIIGWTAIQSMSEWCRQNDMILHMHRAGHGTYTRQKNHGISFRVIAKWLRLAGVDHLHAGTAVGKLEGDPLTVQGYYNVCREMKNAVDLPRGLFFEQDWADLKKVLPVASGGIHAGQMHQLLDLFGDDVVLQFGGGTIGHPMGIQAGATANRVALEAMVLARNEGRDIAHEGPEILRAAAKWCKPLEAALDTWGNISFNYTPTDTSDFVPSVTAA.

Positions 126 and 176 each coordinate substrate. K178 functions as the Proton acceptor in the catalytic mechanism. A substrate-binding site is contributed by K180. Mg(2+) contacts are provided by K204, D206, and E207. K204 is subject to N6-carboxylysine. The active-site Proton acceptor is H296. Substrate contacts are provided by R297, H329, and S381.

Belongs to the RuBisCO large chain family. Type I subfamily. Heterohexadecamer of 8 large chains and 8 small chains. It depends on Mg(2+) as a cofactor.

The catalysed reaction is 2 (2R)-3-phosphoglycerate + 2 H(+) = D-ribulose 1,5-bisphosphate + CO2 + H2O. The enzyme catalyses D-ribulose 1,5-bisphosphate + O2 = 2-phosphoglycolate + (2R)-3-phosphoglycerate + 2 H(+). Its function is as follows. RuBisCO catalyzes two reactions: the carboxylation of D-ribulose 1,5-bisphosphate, the primary event in carbon dioxide fixation, as well as the oxidative fragmentation of the pentose substrate. Both reactions occur simultaneously and in competition at the same active site. This is Ribulose bisphosphate carboxylase large chain from Sinorhizobium medicae (strain WSM419) (Ensifer medicae).